Consider the following 218-residue polypeptide: Adenylate kinase (218 aa).

Residue 10-15 (GAGKGT) coordinates ATP. The interval 30 to 59 (STGDMLRAAVKAGTPLGIEAKKVMDAGGLV) is NMP. AMP contacts are provided by residues T31, R36, 57-59 (GLV), 85-88 (GFPR), and Q92. The interval 122-159 (GRRSHAASGRTYHVKFNPPKVAGVDDVTGEPLIQRDDD) is LID. Residues R123 and 132 to 133 (TY) each bind ATP. Positions 156 and 167 each coordinate AMP. Residue G203 coordinates ATP.

It belongs to the adenylate kinase family. Monomer.

It is found in the cytoplasm. It catalyses the reaction AMP + ATP = 2 ADP. The protein operates within purine metabolism; AMP biosynthesis via salvage pathway; AMP from ADP: step 1/1. Functionally, catalyzes the reversible transfer of the terminal phosphate group between ATP and AMP. Plays an important role in cellular energy homeostasis and in adenine nucleotide metabolism. The chain is Adenylate kinase from Albidiferax ferrireducens (strain ATCC BAA-621 / DSM 15236 / T118) (Rhodoferax ferrireducens).